Consider the following 30-residue polypeptide: Thylakoid lumenal 13.3 kDa protein (30 aa).

Its subcellular location is the plastid. The protein localises to the chloroplast thylakoid lumen. The polypeptide is Thylakoid lumenal 13.3 kDa protein (Spinacia oleracea (Spinach)).